Here is a 739-residue protein sequence, read N- to C-terminus: Phosphoribosylformylglycinamidine synthase subunit PurL (739 aa).

Residue His-53 is part of the active site. ATP-binding residues include Tyr-56 and Lys-95. Position 97 (Glu-97) interacts with Mg(2+). Residues 98-101 (SHNH) and Arg-120 contribute to the substrate site. The active-site Proton acceptor is His-99. Mg(2+) is bound at residue Asp-121. Gln-244 is a substrate binding site. Mg(2+) is bound at residue Asp-274. Residue 318–320 (ESQ) participates in substrate binding. Asp-501 and Gly-538 together coordinate ATP. Asn-539 contacts Mg(2+). Ser-541 contacts substrate.

It belongs to the FGAMS family. In terms of assembly, monomer. Part of the FGAM synthase complex composed of 1 PurL, 1 PurQ and 2 PurS subunits.

It localises to the cytoplasm. The enzyme catalyses N(2)-formyl-N(1)-(5-phospho-beta-D-ribosyl)glycinamide + L-glutamine + ATP + H2O = 2-formamido-N(1)-(5-O-phospho-beta-D-ribosyl)acetamidine + L-glutamate + ADP + phosphate + H(+). It functions in the pathway purine metabolism; IMP biosynthesis via de novo pathway; 5-amino-1-(5-phospho-D-ribosyl)imidazole from N(2)-formyl-N(1)-(5-phospho-D-ribosyl)glycinamide: step 1/2. Functionally, part of the phosphoribosylformylglycinamidine synthase complex involved in the purines biosynthetic pathway. Catalyzes the ATP-dependent conversion of formylglycinamide ribonucleotide (FGAR) and glutamine to yield formylglycinamidine ribonucleotide (FGAM) and glutamate. The FGAM synthase complex is composed of three subunits. PurQ produces an ammonia molecule by converting glutamine to glutamate. PurL transfers the ammonia molecule to FGAR to form FGAM in an ATP-dependent manner. PurS interacts with PurQ and PurL and is thought to assist in the transfer of the ammonia molecule from PurQ to PurL. This chain is Phosphoribosylformylglycinamidine synthase subunit PurL, found in Listeria monocytogenes serotype 4b (strain F2365).